A 158-amino-acid polypeptide reads, in one-letter code: MQGRLSAWLVKHELVHRSLGFDYRGIETLQIKSEDWYSIAVILYAYGYNYLRSQCAYDAAPGGLLASVYHLTRIQYGIDQPEEVCIKVFVPRTNTRIPSVFWIWKSADFQERESYDMLGISYENHPRLKRILMPESWIGWPLRKDYIAPNFYEIQDAH.

This sequence belongs to the complex I 30 kDa subunit family. In terms of assembly, NDH is composed of at least 16 different subunits, 5 of which are encoded in the nucleus.

The protein localises to the plastid. It is found in the chloroplast thylakoid membrane. The catalysed reaction is a plastoquinone + NADH + (n+1) H(+)(in) = a plastoquinol + NAD(+) + n H(+)(out). The enzyme catalyses a plastoquinone + NADPH + (n+1) H(+)(in) = a plastoquinol + NADP(+) + n H(+)(out). In terms of biological role, NDH shuttles electrons from NAD(P)H:plastoquinone, via FMN and iron-sulfur (Fe-S) centers, to quinones in the photosynthetic chain and possibly in a chloroplast respiratory chain. The immediate electron acceptor for the enzyme in this species is believed to be plastoquinone. Couples the redox reaction to proton translocation, and thus conserves the redox energy in a proton gradient. The protein is NAD(P)H-quinone oxidoreductase subunit J, chloroplastic of Piper cenocladum (Ant piper).